A 288-amino-acid polypeptide reads, in one-letter code: Phenazine biosynthesis-like domain-containing protein (288 aa).

E46 is an active-site residue.

It belongs to the PhzF family. Interacts with UNRIP/MAWD.

In Bos taurus (Bovine), this protein is Phenazine biosynthesis-like domain-containing protein (PBLD).